The sequence spans 514 residues: Cilia- and flagella-associated protein 53 (514 aa).

Coiled-coil stretches lie at residues 91–176 and 205–478; these read VINT…EKKV and WEED…AGLA. Disordered stretches follow at residues 261–296 and 495–514; these read QNKA…QDKI and QALS…KPPL.

This sequence belongs to the CFAP53 family. Microtubule inner protein component of sperm flagellar doublet microtubules. Interacts with PIERCE1 and PIERCE2; the interactions link outer dynein arms docking complex (ODA-DC) to the internal microtubule inner proteins (MIP) in cilium axoneme. Interacts with CCDC38. Interacts with CCDC42 and IFT88. Interacts with centriolar satellite proteins PIBF1/CEP90 and PCM1. Interacts with dyneins DNAIC1, DNAIC2 AND DNAH11 and with ODA-DC component ODAD4/TTC25. Expressed predominantly in testis (at protein level). In embryos at 8 dpc, specifically expressed in the node, in particular within the pit cells that are located at the center of the node and have rotating monocilia on their apical surface. In the adult, expressed in epithelial cells of the trachea, brain ventricles, oviduct and testis.

The protein localises to the cytoplasm. Its subcellular location is the cytoskeleton. It localises to the cilium axoneme. It is found in the flagellum axoneme. The protein resides in the microtubule organizing center. The protein localises to the centrosome. Its subcellular location is the centriolar satellite. It localises to the spindle pole. Microtubule inner protein (MIP) part of the dynein-decorated doublet microtubules (DMTs) in cilia axoneme, which is required for motile cilia beating. Regulates motility patterns of both 9+0 and 9+2 motile cilia through differential localization and recruitment of axonemal dynein components. Required for centriolar satellite integrity and non-motile cilium assembly. Required for motile cilium formation. Through its role in the beating of primary cilia, involved in the establishment of organ laterality during embryogenesis. Required for sperm flagellum biogenesis and is essential for male fertility. This is Cilia- and flagella-associated protein 53 from Mus musculus (Mouse).